The primary structure comprises 447 residues: Serine/threonine-protein phosphatase 2A 55 kDa regulatory subunit B alpha isoform (447 aa).

Residue Ala2 is modified to N-acetylalanine. 7 WD repeats span residues 11 to 80 (QWCF…FQSH), 94 to 174 (EKIN…IFAN), 175 to 218 (AHTY…VDIK), 227 to 270 (EVIT…KLFE), 288 to 325 (ISDVKFSHSGRYMMTRDYLSVKIWDLNMENRPVETYQV), 347 to 381 (ECCWNGSDSVVMTGSYNNFFRMFDRNTKRDITLEA), and 414 to 446 (DFNKKILHTAWHPKENIIAVATTNNLYIFQDKV).

It belongs to the phosphatase 2A regulatory subunit B family. As to quaternary structure, PP2A consists of a common heterodimeric core enzyme, composed of a 36 kDa catalytic subunit (subunit C) and a 65 kDa constant regulatory subunit (PR65 or subunit A), that associates with a variety of regulatory subunits. Proteins that associate with the core dimer include three families of regulatory subunits B (the R2/B/PR55/B55, R3/B''/PR72/PR130/PR59 and R5/B'/B56 families), the 48 kDa variable regulatory subunit, viral proteins, and cell signaling molecules. Interacts with the PP2A C catalytic subunit PPP2CA. Interacts with the PP2A A subunit PPP2R1A. Interacts with TP53. Interacts with IER5. Interacts with MFHAS1; the interaction is direct. Interacts with PABIR1/FAM122A (via its N-terminus); the interaction is direct and inhibits PP2A activity. Interacts with ARPP19; the interaction is direct and inhibits PP2A activity. Interacts with CRTC3. As to expression, expressed in all tissues examined.

Functionally, substrate-recognition subunit of protein phosphatase 2A (PP2A) that plays a key role in cell cycle by controlling mitosis entry and exit. Involved in chromosome clustering during late mitosis by mediating dephosphorylation of MKI67. Essential for serine/threonine-protein phosphatase 2A-mediated dephosphorylation of WEE1, preventing its ubiquitin-mediated proteolysis, increasing WEE1 protein levels, and promoting the G2/M checkpoint. This Homo sapiens (Human) protein is Serine/threonine-protein phosphatase 2A 55 kDa regulatory subunit B alpha isoform (PPP2R2A).